A 302-amino-acid polypeptide reads, in one-letter code: tRNA pseudouridine synthase B (302 aa).

Asp-45 (nucleophile) is an active-site residue.

Belongs to the pseudouridine synthase TruB family. Type 1 subfamily.

It carries out the reaction uridine(55) in tRNA = pseudouridine(55) in tRNA. In terms of biological role, responsible for synthesis of pseudouridine from uracil-55 in the psi GC loop of transfer RNAs. The protein is tRNA pseudouridine synthase B of Francisella tularensis subsp. tularensis (strain WY96-3418).